The primary structure comprises 395 residues: Alanine racemase 2 (395 aa).

Residue K60 is the Proton acceptor; specific for D-alanine of the active site. The residue at position 60 (K60) is an N6-(pyridoxal phosphate)lysine. Substrate is bound at residue R158. Y288 functions as the Proton acceptor; specific for L-alanine in the catalytic mechanism. M332 is a binding site for substrate.

The protein belongs to the alanine racemase family. Pyridoxal 5'-phosphate serves as cofactor.

It catalyses the reaction L-alanine = D-alanine. Its pathway is amino-acid biosynthesis; D-alanine biosynthesis; D-alanine from L-alanine: step 1/1. Its function is as follows. Catalyzes the interconversion of L-alanine and D-alanine. May also act on other amino acids. The protein is Alanine racemase 2 (alr2) of Clostridium acetobutylicum (strain ATCC 824 / DSM 792 / JCM 1419 / IAM 19013 / LMG 5710 / NBRC 13948 / NRRL B-527 / VKM B-1787 / 2291 / W).